Consider the following 155-residue polypeptide: uncharacterized protein (155 aa).

In terms of domain architecture, N-acetyltransferase spans 6-155 (TCVRNARLAD…CDEIAMVKTL (150 aa)).

The protein belongs to the acetyltransferase family.

This is an uncharacterized protein from Chlorobaculum tepidum (strain ATCC 49652 / DSM 12025 / NBRC 103806 / TLS) (Chlorobium tepidum).